Reading from the N-terminus, the 294-residue chain is 4-diphosphocytidyl-2-C-methyl-D-erythritol kinase (294 aa).

Residue Lys-15 is part of the active site. 101–111 contacts ATP; that stretch reads PSEAGLGGGSS. Residue Asp-143 is part of the active site.

The protein belongs to the GHMP kinase family. IspE subfamily.

It carries out the reaction 4-CDP-2-C-methyl-D-erythritol + ATP = 4-CDP-2-C-methyl-D-erythritol 2-phosphate + ADP + H(+). Its pathway is isoprenoid biosynthesis; isopentenyl diphosphate biosynthesis via DXP pathway; isopentenyl diphosphate from 1-deoxy-D-xylulose 5-phosphate: step 3/6. Catalyzes the phosphorylation of the position 2 hydroxy group of 4-diphosphocytidyl-2C-methyl-D-erythritol. The protein is 4-diphosphocytidyl-2-C-methyl-D-erythritol kinase of Fusobacterium nucleatum subsp. nucleatum (strain ATCC 25586 / DSM 15643 / BCRC 10681 / CIP 101130 / JCM 8532 / KCTC 2640 / LMG 13131 / VPI 4355).